A 701-amino-acid polypeptide reads, in one-letter code: Elongation factor G (701 aa).

The tr-type G domain occupies 8 to 286 (DRVRNIGIIA…AVVLLLPSPL (279 aa)). GTP contacts are provided by residues 17–24 (AHIDAGKT), 85–89 (DTPGH), and 139–142 (NKMD).

It belongs to the TRAFAC class translation factor GTPase superfamily. Classic translation factor GTPase family. EF-G/EF-2 subfamily.

It localises to the cytoplasm. In terms of biological role, catalyzes the GTP-dependent ribosomal translocation step during translation elongation. During this step, the ribosome changes from the pre-translocational (PRE) to the post-translocational (POST) state as the newly formed A-site-bound peptidyl-tRNA and P-site-bound deacylated tRNA move to the P and E sites, respectively. Catalyzes the coordinated movement of the two tRNA molecules, the mRNA and conformational changes in the ribosome. This is Elongation factor G from Herpetosiphon aurantiacus (strain ATCC 23779 / DSM 785 / 114-95).